A 324-amino-acid chain; its full sequence is tRNA pseudouridine synthase B (324 aa).

Aspartate 49 acts as the Nucleophile in catalysis.

It belongs to the pseudouridine synthase TruB family. Type 1 subfamily.

It carries out the reaction uridine(55) in tRNA = pseudouridine(55) in tRNA. Its function is as follows. Responsible for synthesis of pseudouridine from uracil-55 in the psi GC loop of transfer RNAs. This is tRNA pseudouridine synthase B from Brucella anthropi (strain ATCC 49188 / DSM 6882 / CCUG 24695 / JCM 21032 / LMG 3331 / NBRC 15819 / NCTC 12168 / Alc 37) (Ochrobactrum anthropi).